Consider the following 398-residue polypeptide: Type III polyketide synthase pspB (398 aa).

Residues Lys47 and 47–54 (KLLQINRS) contribute to the CoA site. The Nucleophile role is filled by Cys152. A substrate-binding site is contributed by 214–215 (SD). Residues Leu267, Gly321, 321-324 (GGEA), and Ala324 each bind CoA.

The protein belongs to the thiolase-like superfamily. Chalcone/stilbene synthases family. In terms of assembly, homodimer.

It carries out the reaction 11 malonyl-CoA + acetyl-CoA + S-adenosyl-L-methionine + 12 NADPH + 22 H(+) = soppiline B + S-adenosyl-L-homocysteine + 12 CO2 + 12 NADP(+) + 12 CoA + 8 H2O. Its pathway is secondary metabolite biosynthesis. Type III polyketide synthase; part of the gene cluster that mediates the biosynthesis of the alkylresorcinols called soppilines. The biosynthesis starts with the HR-PKS pspA-catalyzed carbon chain assembly through nine chain elongation cycles, using acetyl CoA and malonyl CoA as a starter and extender units, respectively, to produce the polyketide soppiline A. In the first round, the KR, DH, and CMeT domains work to produce 2-methyl-2-butenyl thioester. In rounds 2 to 5, the KR, DH, and ER domains fully catalyze the reduction of the elongated beta-ketothioester, resulting in the insertion of eight methylene units. The unusual Z,E,Z-triene motif is likely constructed during rounds 6 to 8. Typically, the DH domain introduces a double bond at an alpha,beta-position of an elongated polyketide chain, with the dehydration of a beta-hydroxy group. The last extension cycle would be carried out with L-oriented beta-ketoreduction by the KR domain to produce beta-hydroxy carboxylic acid soppiline A. The type III PKS pspB intercepts the elongated polyketide chain at round 8 from the HR-PKS pspA, followed by a tri-keto extension and decarboxylative aldol cyclization to produce 1,3,5-trisubstituted alkylresorcinol soppiline B. Subsequently, the cytochrome P450 monooxygenase pspC catalyzes three-step oxidations at the C-4 methyl group to carboxylic acid to yield soppiline C. In Penicillium soppii, this protein is Type III polyketide synthase pspB.